A 410-amino-acid polypeptide reads, in one-letter code: Structural protein ORF142 (410 aa).

Disordered regions lie at residues 1-24 (MNQN…HVDT) and 156-197 (PTST…VNIS). The span at 161–188 (DDNDNENRSDDDDDDDDYRNDREEVEDS) shows a compositional bias: acidic residues.

The protein resides in the virion. The sequence is that of Structural protein ORF142 from Trichoplusia ni ascovirus 2c (TnAV-2c).